A 494-amino-acid chain; its full sequence is Splicing regulatory glutamine/lysine-rich protein 1 (494 aa).

The 77-residue stretch at 69-145 (RTVYVGNLNS…RPLKINHSNN (77 aa)) folds into the RRM domain. Residues S174 and S187 each carry the phosphoserine modification. Residues 176–494 (ISAAIEPESG…ERLCSTADAV (319 aa)) form a disordered region. The span at 183 to 192 (ESGKSNERKG) shows a compositional bias: basic and acidic residues. Basic residues-rich tracts occupy residues 193–230 (GRSR…RSRS) and 238–262 (SKSP…RSRD). Over residues 263-340 (KRKDTREKVK…DRSKEADEKR (78 aa)) the composition is skewed to basic and acidic residues. T348 carries the post-translational modification Phosphothreonine. Over residues 357-373 (RRSRSASRERRRRRSRS) the composition is skewed to basic residues. Basic and acidic residues-rich tracts occupy residues 404–453 (REKE…KEAD) and 463–474 (KDTARTEEESKA).

Belongs to the splicing factor SR family. As to quaternary structure, interacts with SREK1IP1. Homodimer. Binds SFRS1, SFRS2, SFRS3 and SFRS6. Interacts with the spliceosome. Ubiquitous. Detected in liver, brain, lung, spleen, testis and pancreas.

The protein resides in the nucleus. Functionally, participates in the regulation of alternative splicing by modulating the activity of other splice facors. Inhibits the splicing activity of SFRS1, SFRS2 and SFRS6. Augments the splicing activity of SFRS3. This chain is Splicing regulatory glutamine/lysine-rich protein 1 (Srek1), found in Rattus norvegicus (Rat).